A 236-amino-acid chain; its full sequence is Small ribosomal subunit protein uS2c (236 aa).

This sequence belongs to the universal ribosomal protein uS2 family.

The protein resides in the plastid. It is found in the chloroplast. This is Small ribosomal subunit protein uS2c (rps2) from Citrus sinensis (Sweet orange).